We begin with the raw amino-acid sequence, 179 residues long: Replication restart protein DnaT (179 aa).

Residues 151 to 179 (SRASNGGQPKRDVNSVSEPDSHIPRGFRG) form a disordered region. Residues 159 to 173 (PKRDVNSVSEPDSHI) show a composition bias toward basic and acidic residues.

This sequence belongs to the DnaT family. Homooligomerizes. Interacts with PriB. Component of the replication restart primosome. Primosome assembly occurs via a 'hand-off' mechanism. PriA binds to replication forks, subsequently PriB then DnaT bind; DnaT then displaces ssDNA to generate the helicase loading substrate.

Functionally, involved in the restart of stalled replication forks, which reloads the replicative helicase on sites other than the origin of replication. Can function in multiple replication restart pathways. Displaces ssDNA from a PriB-ssDNA complex. Probably forms a spiral filament on ssDNA. The sequence is that of Replication restart protein DnaT from Klebsiella pneumoniae (strain 342).